The primary structure comprises 373 residues: Glutamate 5-kinase (373 aa).

Residue K15 coordinates ATP. Residues S54, D141, and N153 each coordinate substrate. ATP contacts are provided by residues 173–174 (SD) and 215–221 (TGGMATK). The 79-residue stretch at 280–358 (RGKLLVDEGA…SEIEVVLGYK (79 aa)) folds into the PUA domain.

The protein belongs to the glutamate 5-kinase family.

Its subcellular location is the cytoplasm. It carries out the reaction L-glutamate + ATP = L-glutamyl 5-phosphate + ADP. It functions in the pathway amino-acid biosynthesis; L-proline biosynthesis; L-glutamate 5-semialdehyde from L-glutamate: step 1/2. Functionally, catalyzes the transfer of a phosphate group to glutamate to form L-glutamate 5-phosphate. This chain is Glutamate 5-kinase, found in Syntrophotalea carbinolica (strain DSM 2380 / NBRC 103641 / GraBd1) (Pelobacter carbinolicus).